Consider the following 144-residue polypeptide: Small ribosomal subunit protein uS11 (144 aa).

Positions 123–144 are disordered; the sequence is EDVTPVPTDSTRRKGSRRGRRL. Over residues 135 to 144 the composition is skewed to basic residues; the sequence is RKGSRRGRRL.

The protein belongs to the universal ribosomal protein uS11 family.

The sequence is that of Small ribosomal subunit protein uS11 (RPS14) from Trypanosoma brucei brucei.